Reading from the N-terminus, the 216-residue chain is ATP-dependent Clp protease proteolytic subunit (216 aa).

Residue S120 is the Nucleophile of the active site. H145 is a catalytic residue.

The protein belongs to the peptidase S14 family. In terms of assembly, fourteen ClpP subunits assemble into 2 heptameric rings which stack back to back to give a disk-like structure with a central cavity, resembling the structure of eukaryotic proteasomes.

It localises to the cytoplasm. It catalyses the reaction Hydrolysis of proteins to small peptides in the presence of ATP and magnesium. alpha-casein is the usual test substrate. In the absence of ATP, only oligopeptides shorter than five residues are hydrolyzed (such as succinyl-Leu-Tyr-|-NHMec, and Leu-Tyr-Leu-|-Tyr-Trp, in which cleavage of the -Tyr-|-Leu- and -Tyr-|-Trp bonds also occurs).. Functionally, cleaves peptides in various proteins in a process that requires ATP hydrolysis. Has a chymotrypsin-like activity. Plays a major role in the degradation of misfolded proteins. The sequence is that of ATP-dependent Clp protease proteolytic subunit from Cupriavidus necator (strain ATCC 17699 / DSM 428 / KCTC 22496 / NCIMB 10442 / H16 / Stanier 337) (Ralstonia eutropha).